The following is a 469-amino-acid chain: Citrate synthase, mitochondrial (469 aa).

Residues M1–S30 constitute a mitochondrion transit peptide. Catalysis depends on residues H304 and H350. R359 lines the oxaloacetate pocket. The active site involves D405. Oxaloacetate contacts are provided by R431 and R451.

This sequence belongs to the citrate synthase family. Homodimer.

It localises to the mitochondrion matrix. It catalyses the reaction oxaloacetate + acetyl-CoA + H2O = citrate + CoA + H(+). The protein operates within carbohydrate metabolism; tricarboxylic acid cycle; isocitrate from oxaloacetate: step 1/2. Functionally, key enzyme of the Krebs tricarboxylic acid cycle which catalyzes the synthesis of citrate from acetyl coenzyme A and oxaloacetate. In Katsuwonus pelamis (Skipjack tuna), this protein is Citrate synthase, mitochondrial (cs).